A 380-amino-acid polypeptide reads, in one-letter code: Cytochrome b (380 aa).

The next 4 helical transmembrane spans lie at 33–53, 77–98, 113–133, and 178–198; these read FGSLLGLCLITQILTGLFLAM, WLIRNLHANGASFFFICMYLHV, WNIGVILLLLVMMTAFVGYVL, and FFAFHFILPFIVAAAVILHLL. Heme b-binding residues include H83 and H97. Residues H182 and H196 each contribute to the heme b site. Residue H201 coordinates a ubiquinone. A run of 4 helical transmembrane segments spans residues 226–246, 288–308, 320–340, and 347–367; these read YKDILGFIVMLLALITLALFS, LGGVLALLFSILVLMIVPILH, FSQFLFWVLVADMLILTWIGG, and FIIIGQIASILYFTLFLLLIP.

This sequence belongs to the cytochrome b family. As to quaternary structure, the cytochrome bc1 complex contains 3 respiratory subunits (MT-CYB, CYC1 and UQCRFS1), 2 core proteins (UQCRC1 and UQCRC2) and probably 6 low-molecular weight proteins. Requires heme b as cofactor.

It localises to the mitochondrion inner membrane. Functionally, component of the ubiquinol-cytochrome c reductase complex (complex III or cytochrome b-c1 complex) that is part of the mitochondrial respiratory chain. The b-c1 complex mediates electron transfer from ubiquinol to cytochrome c. Contributes to the generation of a proton gradient across the mitochondrial membrane that is then used for ATP synthesis. This chain is Cytochrome b (mt-cyb), found in Arapaima gigas (Arapaima).